The primary structure comprises 340 residues: Formimidoylglutamase (340 aa).

Positions 129, 160, 162, 164, 257, and 259 each coordinate Mn(2+).

It belongs to the arginase family. Requires Mn(2+) as cofactor.

The enzyme catalyses N-formimidoyl-L-glutamate + H2O = formamide + L-glutamate. The protein operates within amino-acid degradation; L-histidine degradation into L-glutamate; L-glutamate from N-formimidoyl-L-glutamate (hydrolase route): step 1/1. Catalyzes the conversion of N-formimidoyl-L-glutamate to L-glutamate and formamide. This is Formimidoylglutamase from Vibrio parahaemolyticus serotype O3:K6 (strain RIMD 2210633).